We begin with the raw amino-acid sequence, 202 residues long: Imidazoleglycerol-phosphate dehydratase (202 aa).

The protein belongs to the imidazoleglycerol-phosphate dehydratase family.

It localises to the cytoplasm. It catalyses the reaction D-erythro-1-(imidazol-4-yl)glycerol 3-phosphate = 3-(imidazol-4-yl)-2-oxopropyl phosphate + H2O. It participates in amino-acid biosynthesis; L-histidine biosynthesis; L-histidine from 5-phospho-alpha-D-ribose 1-diphosphate: step 6/9. This Rhizobium etli (strain ATCC 51251 / DSM 11541 / JCM 21823 / NBRC 15573 / CFN 42) protein is Imidazoleglycerol-phosphate dehydratase.